We begin with the raw amino-acid sequence, 404 residues long: Cysteine desulfurase IscS (404 aa).

Pyridoxal 5'-phosphate-binding positions include 73–74, asparagine 153, glutamine 181, and 201–203; these read AT and SAH. N6-(pyridoxal phosphate)lysine is present on lysine 204. Pyridoxal 5'-phosphate is bound at residue threonine 241. Cysteine 327 (cysteine persulfide intermediate) is an active-site residue. Residue cysteine 327 participates in [2Fe-2S] cluster binding.

It belongs to the class-V pyridoxal-phosphate-dependent aminotransferase family. NifS/IscS subfamily. In terms of assembly, homodimer. Forms a heterotetramer with IscU, interacts with other sulfur acceptors. Pyridoxal 5'-phosphate is required as a cofactor.

The protein resides in the cytoplasm. The enzyme catalyses (sulfur carrier)-H + L-cysteine = (sulfur carrier)-SH + L-alanine. It participates in cofactor biosynthesis; iron-sulfur cluster biosynthesis. In terms of biological role, master enzyme that delivers sulfur to a number of partners involved in Fe-S cluster assembly, tRNA modification or cofactor biosynthesis. Catalyzes the removal of elemental sulfur atoms from cysteine to produce alanine. Functions as a sulfur delivery protein for Fe-S cluster synthesis onto IscU, an Fe-S scaffold assembly protein, as well as other S acceptor proteins. This is Cysteine desulfurase IscS from Anaeromyxobacter dehalogenans (strain 2CP-C).